Consider the following 833-residue polypeptide: Glycerol-3-phosphate acyltransferase (833 aa).

The HXXXXD motif motif lies at 310-315 (HRSHID).

This sequence belongs to the GPAT/DAPAT family.

It localises to the cell inner membrane. It carries out the reaction sn-glycerol 3-phosphate + an acyl-CoA = a 1-acyl-sn-glycero-3-phosphate + CoA. Its pathway is phospholipid metabolism; CDP-diacylglycerol biosynthesis; CDP-diacylglycerol from sn-glycerol 3-phosphate: step 1/3. This is Glycerol-3-phosphate acyltransferase from Pseudomonas syringae pv. tomato (strain ATCC BAA-871 / DC3000).